Reading from the N-terminus, the 85-residue chain is Small ribosomal subunit protein bS20 (85 aa).

This sequence belongs to the bacterial ribosomal protein bS20 family.

Functionally, binds directly to 16S ribosomal RNA. This chain is Small ribosomal subunit protein bS20, found in Borrelia garinii subsp. bavariensis (strain ATCC BAA-2496 / DSM 23469 / PBi) (Borreliella bavariensis).